The primary structure comprises 1310 residues: Clustered mitochondria protein homolog (1310 aa).

The region spanning 375-619 is the Clu domain; sequence DITRSQESYL…RVTPLDVVWQ (245 aa). Residues 662 to 682 are compositionally biased toward basic and acidic residues; that stretch reads KAQEDAANKEQPSETTESKEG. Disordered stretches follow at residues 662–692 and 931–960; these read KAQEDAANKEQPSETTESKEGESEEKAEEAL and VANGVNGASHDESKKKKKKGGDSKSPSRAV. TPR repeat units lie at residues 1033–1066, 1075–1108, and 1117–1150; these read AKLYHQLSMLYYQTDEKEAAVELARKAVIVTERT, ILAYLNLSLFEHASGNTKTALVYIKHAMDLWKII, and ITTMNNAAVMLQHLKQYSDSRKWFEASLAVCESL. Disordered regions lie at residues 1245–1266 and 1281–1310; these read VQPQVGQTAPEASGAKGAANAS and GGDATSSRSKQKKRAAASNPKLRGSKKSSA.

The protein belongs to the CLU family. May associate with the eukaryotic translation initiation factor 3 (eIF-3) complex.

The protein resides in the cytoplasm. In terms of biological role, mRNA-binding protein involved in proper cytoplasmic distribution of mitochondria. This chain is Clustered mitochondria protein homolog, found in Aspergillus fumigatus (strain CBS 144.89 / FGSC A1163 / CEA10) (Neosartorya fumigata).